We begin with the raw amino-acid sequence, 71 residues long: High-potential iron-sulfur protein isozyme 2 (71 aa).

[4Fe-4S] cluster is bound by residues Cys-34, Cys-37, Cys-51, and Cys-65.

It belongs to the high-potential iron-sulfur protein (HiPIP) family. As to quaternary structure, homodimer.

Specific class of high-redox-potential 4Fe-4S ferredoxins. Functions in anaerobic electron transport in most purple and in some other photosynthetic bacteria and in at least one genus (Paracoccus) of halophilic, denitrifying bacteria. The polypeptide is High-potential iron-sulfur protein isozyme 2 (hip2) (Ectothiorhodospira shaposhnikovii (Ectothiorhodospira vacuolata)).